The following is a 161-amino-acid chain: Nucleotide-binding protein Reut_A2760 (161 aa).

This sequence belongs to the YajQ family.

In terms of biological role, nucleotide-binding protein. The chain is Nucleotide-binding protein Reut_A2760 from Cupriavidus pinatubonensis (strain JMP 134 / LMG 1197) (Cupriavidus necator (strain JMP 134)).